We begin with the raw amino-acid sequence, 180 residues long: Large ribosomal subunit protein uL6 (180 aa).

This sequence belongs to the universal ribosomal protein uL6 family. Part of the 50S ribosomal subunit.

In terms of biological role, this protein binds to the 23S rRNA, and is important in its secondary structure. It is located near the subunit interface in the base of the L7/L12 stalk, and near the tRNA binding site of the peptidyltransferase center. The sequence is that of Large ribosomal subunit protein uL6 from Clostridioides difficile (strain 630) (Peptoclostridium difficile).